A 285-amino-acid chain; its full sequence is Nucleotide-binding protein Avin_12760 (285 aa).

8–15 serves as a coordination point for ATP; the sequence is GRSGSGKS. Residue 60–63 participates in GTP binding; sequence DARN.

This sequence belongs to the RapZ-like family.

In terms of biological role, displays ATPase and GTPase activities. The sequence is that of Nucleotide-binding protein Avin_12760 from Azotobacter vinelandii (strain DJ / ATCC BAA-1303).